The following is a 417-amino-acid chain: Cobalamin binding intrinsic factor (417 aa).

The first 18 residues, 1–18 (MAWLSFYLLNVLWAVAGT), serve as a signal peptide directing secretion. 3 disulfides stabilise this stretch: cysteine 26-cysteine 246, cysteine 103-cysteine 288, and cysteine 143-cysteine 182. Aspartate 171 contributes to the cob(II)alamin binding site. Phosphoserine is present on serine 191. Residue asparagine 209 is glycosylated (N-linked (GlcNAc...) asparagine). Positions 222 and 270 each coordinate cob(II)alamin. N-linked (GlcNAc...) asparagine glycosylation is found at asparagine 311 and asparagine 330. Residues 365 to 370 (SWGLIV) and 386 to 395 (WEFLSGKTPL) each bind cob(II)alamin. Asparagine 413 is a glycosylation site (N-linked (GlcNAc...) asparagine).

This sequence belongs to the eukaryotic cobalamin transport proteins family. Interacts with CUBN (via CUB domains). In terms of processing, the N-terminus is blocked. As to expression, gastric mucosa.

The protein localises to the secreted. Functionally, promotes absorption of the essential vitamin cobalamin (Cbl) in the ileum. After interaction with CUBN, the CBLIF-cobalamin complex is internalized via receptor-mediated endocytosis. In Rattus norvegicus (Rat), this protein is Cobalamin binding intrinsic factor.